Consider the following 137-residue polypeptide: 6,7-dimethyl-8-ribityllumazine synthase (137 aa).

5-amino-6-(D-ribitylamino)uracil is bound by residues F11, 43 to 45 (SFD), and 67 to 69 (CVI). Position 72–73 (72–73 (DT)) interacts with (2S)-2-hydroxy-3-oxobutyl phosphate. The active-site Proton donor is H75. L100 serves as a coordination point for 5-amino-6-(D-ribitylamino)uracil. A (2S)-2-hydroxy-3-oxobutyl phosphate-binding site is contributed by R115.

This sequence belongs to the DMRL synthase family. As to quaternary structure, forms an icosahedral capsid composed of 60 subunits, arranged as a dodecamer of pentamers.

The enzyme catalyses (2S)-2-hydroxy-3-oxobutyl phosphate + 5-amino-6-(D-ribitylamino)uracil = 6,7-dimethyl-8-(1-D-ribityl)lumazine + phosphate + 2 H2O + H(+). The protein operates within cofactor biosynthesis; riboflavin biosynthesis; riboflavin from 2-hydroxy-3-oxobutyl phosphate and 5-amino-6-(D-ribitylamino)uracil: step 1/2. In terms of biological role, catalyzes the formation of 6,7-dimethyl-8-ribityllumazine by condensation of 5-amino-6-(D-ribitylamino)uracil with 3,4-dihydroxy-2-butanone 4-phosphate. This is the penultimate step in the biosynthesis of riboflavin. The sequence is that of 6,7-dimethyl-8-ribityllumazine synthase from Methanococcus maripaludis (strain DSM 14266 / JCM 13030 / NBRC 101832 / S2 / LL).